Here is a 688-residue protein sequence, read N- to C-terminus: Putative proline--tRNA ligase YHR020W (688 aa).

Serine 149 bears the Phosphoserine mark. Position 170 is a phosphothreonine (threonine 170). A disordered region spans residues glutamate 631 to serine 650. Serine 655 carries the post-translational modification Phosphoserine.

It belongs to the class-II aminoacyl-tRNA synthetase family.

It carries out the reaction tRNA(Pro) + L-proline + ATP = L-prolyl-tRNA(Pro) + AMP + diphosphate. The protein is Putative proline--tRNA ligase YHR020W of Saccharomyces cerevisiae (strain ATCC 204508 / S288c) (Baker's yeast).